Consider the following 331-residue polypeptide: Tryptophan--tRNA ligase 1 (331 aa).

Residues 9–11 (KPT) and 17–18 (GN) contribute to the ATP site. The 'HIGH' region signature appears at 10-18 (PTGHLTLGN). L-tryptophan is bound at residue D137. ATP-binding positions include 149–151 (GDD), V188, and 197–201 (KMGKS). A 'KMSKS' region motif is present at residues 197 to 201 (KMGKS).

Belongs to the class-I aminoacyl-tRNA synthetase family. Homodimer.

It is found in the cytoplasm. It carries out the reaction tRNA(Trp) + L-tryptophan + ATP = L-tryptophyl-tRNA(Trp) + AMP + diphosphate + H(+). Its function is as follows. Catalyzes the attachment of tryptophan to tRNA(Trp). This is Tryptophan--tRNA ligase 1 from Streptomyces avermitilis (strain ATCC 31267 / DSM 46492 / JCM 5070 / NBRC 14893 / NCIMB 12804 / NRRL 8165 / MA-4680).